The sequence spans 638 residues: Threonine--tRNA ligase (638 aa).

The region spanning 1–61 is the TGS domain; that stretch reads MPVITLPDGS…EHDARIEIVT (61 aa). Residues 243–534 are catalytic; it reads DHRKIAKAQD…LIEEYAGHFP (292 aa). Zn(2+) is bound by residues Cys334, His385, and His511.

It belongs to the class-II aminoacyl-tRNA synthetase family. As to quaternary structure, homodimer. Requires Zn(2+) as cofactor.

It is found in the cytoplasm. The enzyme catalyses tRNA(Thr) + L-threonine + ATP = L-threonyl-tRNA(Thr) + AMP + diphosphate + H(+). Catalyzes the attachment of threonine to tRNA(Thr) in a two-step reaction: L-threonine is first activated by ATP to form Thr-AMP and then transferred to the acceptor end of tRNA(Thr). Also edits incorrectly charged L-seryl-tRNA(Thr). The protein is Threonine--tRNA ligase of Idiomarina loihiensis (strain ATCC BAA-735 / DSM 15497 / L2-TR).